The primary structure comprises 220 residues: Dual specificity phosphatase 29 (220 aa).

In terms of domain architecture, Tyrosine-protein phosphatase spans 54 to 202 (HVNEVWPKLY…LRELDKQLVQ (149 aa)). Residue 146–153 (HCVMGRSR) coordinates substrate. Residue cysteine 147 is the Phosphocysteine intermediate of the active site.

This sequence belongs to the protein-tyrosine phosphatase family. Non-receptor class dual specificity subfamily. In terms of assembly, homodimer. Interacts with PRKAA2.

The protein resides in the cytoplasm. Its subcellular location is the nucleus. It catalyses the reaction O-phospho-L-tyrosyl-[protein] + H2O = L-tyrosyl-[protein] + phosphate. The catalysed reaction is O-phospho-L-seryl-[protein] + H2O = L-seryl-[protein] + phosphate. It carries out the reaction O-phospho-L-threonyl-[protein] + H2O = L-threonyl-[protein] + phosphate. Functionally, dual specificity phosphatase able to dephosphorylate phosphotyrosine, phosphoserine and phosphothreonine residues within the same substrate, with a preference for phosphotyrosine as a substrate. Involved in the modulation of intracellular signaling cascades. In skeletal muscle regulates systemic glucose homeostasis by activating, AMPK, an energy sensor protein kinase. Affects MAP kinase signaling though modulation of the ERK1/2 cascade in skeletal muscle promoting muscle cell differentiation, development and atrophy. The chain is Dual specificity phosphatase 29 (DUSP29) from Pan troglodytes (Chimpanzee).